Consider the following 658-residue polypeptide: Threonine--tRNA ligase (658 aa).

Residues 1-64 enclose the TGS domain; the sequence is MLNSVSLTFP…GKSGKVEIIT (64 aa). The tract at residues 246-549 is catalytic; sequence DHRKLGREMD…LIENYSGHFP (304 aa). Cysteine 343, histidine 394, and histidine 526 together coordinate Zn(2+).

Belongs to the class-II aminoacyl-tRNA synthetase family. In terms of assembly, homodimer. Requires Zn(2+) as cofactor.

The protein localises to the cytoplasm. The enzyme catalyses tRNA(Thr) + L-threonine + ATP = L-threonyl-tRNA(Thr) + AMP + diphosphate + H(+). Its function is as follows. Catalyzes the attachment of threonine to tRNA(Thr) in a two-step reaction: L-threonine is first activated by ATP to form Thr-AMP and then transferred to the acceptor end of tRNA(Thr). Also edits incorrectly charged L-seryl-tRNA(Thr). This Mesorhizobium japonicum (strain LMG 29417 / CECT 9101 / MAFF 303099) (Mesorhizobium loti (strain MAFF 303099)) protein is Threonine--tRNA ligase.